The following is a 272-amino-acid chain: Thymidine phosphorylase (272 aa).

This sequence belongs to the thymidine/pyrimidine-nucleoside phosphorylase family. In terms of assembly, homodimer.

It carries out the reaction thymidine + phosphate = 2-deoxy-alpha-D-ribose 1-phosphate + thymine. Functionally, the enzymes which catalyze the reversible phosphorolysis of pyrimidine nucleosides are involved in the degradation of these compounds and in their utilization as carbon and energy sources, or in the rescue of pyrimidine bases for nucleotide synthesis. The polypeptide is Thymidine phosphorylase (deoA) (Metamycoplasma hominis (Mycoplasma hominis)).